Reading from the N-terminus, the 786-residue chain is Zinc finger transcription factor YRM1 (786 aa).

The tract at residues 1-25 (MSKRGSLQDRASPSEETVKKAQKRR) is disordered. The zn(2)-C6 fungal-type DNA-binding region spans 31-59 (CAFCRKRKLRCDQQKPMCSTCKTRGRSGC). The interval 721-747 (PLAGNSPGLPPEEVRNNSENASHNNET) is disordered. A compositionally biased stretch (polar residues) spans 737-747 (NSENASHNNET).

It is found in the cytoplasm. The protein resides in the nucleus. In terms of biological role, transcription factor involved in the regulation of multidrug resistance genes. Acts in concert with YRR1. The sequence is that of Zinc finger transcription factor YRM1 (YRM1) from Saccharomyces cerevisiae (strain ATCC 204508 / S288c) (Baker's yeast).